Consider the following 418-residue polypeptide: MAQTLVEKIFSKASGKEVKAGEFVMANIDLAMIHDITAPLAIKAFREILGSDAKVWDKSKVIMAFDHQVPADSVHAAENHKMLRKFAEEQGILNYDVKGGIAHQIMVENHVEPGMLIVGADSHTCMYGALGAFATGIGSTDMGFVLAMGKLWFKVPESIRFNVHGKLEKHVYGKDIVLKLIGMVGADGANYKACIYSGEVVEKLGMSDRLTMCNMAIEMGGKAGIVEPDKTTLEYLKAMGRPYEGELLKSDEDAEFQEVELDVTGMEPQVAAPHRVDNVVGISEVEGTRVDQVFIGSCTNGRYEDLKIAAEILKGEKVASNVRLIVIPASHREYRRALKEGLIEIFVDAGALVEAPCCGPCMGGSFGLIASGEVSVSTSNRNFIGRQGSPEGKIYLVNPAVAAATAIYGEITDPRKIK.

The [4Fe-4S] cluster site is built by Cys-298, Cys-358, and Cys-361.

The protein belongs to the aconitase/IPM isomerase family. LeuC type 2 subfamily. Heterodimer of LeuC and LeuD. The cofactor is [4Fe-4S] cluster.

It catalyses the reaction (2R,3S)-3-isopropylmalate = (2S)-2-isopropylmalate. Its pathway is amino-acid biosynthesis; L-leucine biosynthesis; L-leucine from 3-methyl-2-oxobutanoate: step 2/4. Its function is as follows. Catalyzes the isomerization between 2-isopropylmalate and 3-isopropylmalate, via the formation of 2-isopropylmaleate. In Archaeoglobus fulgidus (strain ATCC 49558 / DSM 4304 / JCM 9628 / NBRC 100126 / VC-16), this protein is 3-isopropylmalate dehydratase large subunit 1.